The sequence spans 251 residues: Triosephosphate isomerase (251 aa).

9 to 11 is a binding site for substrate; sequence NWK. Histidine 95 acts as the Electrophile in catalysis. The Proton acceptor role is filled by glutamate 167. Substrate-binding positions include glycine 173, serine 213, and 234 to 235; that span reads GG.

Belongs to the triosephosphate isomerase family. Homodimer.

The protein resides in the cytoplasm. It carries out the reaction D-glyceraldehyde 3-phosphate = dihydroxyacetone phosphate. The protein operates within carbohydrate biosynthesis; gluconeogenesis. It functions in the pathway carbohydrate degradation; glycolysis; D-glyceraldehyde 3-phosphate from glycerone phosphate: step 1/1. Its function is as follows. Involved in the gluconeogenesis. Catalyzes stereospecifically the conversion of dihydroxyacetone phosphate (DHAP) to D-glyceraldehyde-3-phosphate (G3P). This is Triosephosphate isomerase from Lacticaseibacillus casei (strain BL23) (Lactobacillus casei).